Consider the following 508-residue polypeptide: Photosystem II CP47 reaction center protein (508 aa).

Transmembrane regions (helical) follow at residues 21–36 (SVHI…WAGS), 101–115 (IVFS…IWHW), 140–156 (GIHL…FGAF), 203–218 (IAAG…FHLS), 237–252 (VLSS…AFVV), and 457–472 (SFAL…HGAR).

It belongs to the PsbB/PsbC family. PsbB subfamily. In terms of assembly, PSII is composed of 1 copy each of membrane proteins PsbA, PsbB, PsbC, PsbD, PsbE, PsbF, PsbH, PsbI, PsbJ, PsbK, PsbL, PsbM, PsbT, PsbX, PsbY, PsbZ, Psb30/Ycf12, at least 3 peripheral proteins of the oxygen-evolving complex and a large number of cofactors. It forms dimeric complexes. The cofactor is Binds multiple chlorophylls. PSII binds additional chlorophylls, carotenoids and specific lipids..

The protein localises to the plastid. Its subcellular location is the chloroplast thylakoid membrane. In terms of biological role, one of the components of the core complex of photosystem II (PSII). It binds chlorophyll and helps catalyze the primary light-induced photochemical processes of PSII. PSII is a light-driven water:plastoquinone oxidoreductase, using light energy to abstract electrons from H(2)O, generating O(2) and a proton gradient subsequently used for ATP formation. In Nymphaea alba (White water-lily), this protein is Photosystem II CP47 reaction center protein.